Reading from the N-terminus, the 77-residue chain is uncharacterized protein (77 aa).

2 helical membrane passes run 22 to 42 (VFAN…LPVG) and 44 to 64 (LIGL…FFLG).

The protein resides in the cell membrane. This is an uncharacterized protein from Methanocaldococcus jannaschii (strain ATCC 43067 / DSM 2661 / JAL-1 / JCM 10045 / NBRC 100440) (Methanococcus jannaschii).